The sequence spans 428 residues: Glutamyl-tRNA reductase (428 aa).

Substrate is bound by residues 49–52 (TCNR), Ser-109, 114–116 (EGQ), and Gln-120. Cys-50 acts as the Nucleophile in catalysis. 189–194 (GAGKMA) lines the NADP(+) pocket.

The protein belongs to the glutamyl-tRNA reductase family. As to quaternary structure, homodimer.

It carries out the reaction (S)-4-amino-5-oxopentanoate + tRNA(Glu) + NADP(+) = L-glutamyl-tRNA(Glu) + NADPH + H(+). Its pathway is porphyrin-containing compound metabolism; protoporphyrin-IX biosynthesis; 5-aminolevulinate from L-glutamyl-tRNA(Glu): step 1/2. It participates in porphyrin-containing compound metabolism; chlorophyll biosynthesis. Catalyzes the NADPH-dependent reduction of glutamyl-tRNA(Glu) to glutamate 1-semialdehyde (GSA). This chain is Glutamyl-tRNA reductase, found in Rippkaea orientalis (strain PCC 8801 / RF-1) (Cyanothece sp. (strain PCC 8801)).